The following is a 278-amino-acid chain: Rhomboid protease GlpG (278 aa).

6 helical membrane-spanning segments follow: residues 94-114, 143-163, 175-195, 196-216, 224-241, and 245-267; these read AGPL…LMLI, AFLH…WYLG, LLVL…LFSG, ANFG…WLTG, ISLP…LIAG, and ILGL…LMAF. Residue serine 202 is the Nucleophile of the active site. The active site involves histidine 255.

The protein belongs to the peptidase S54 family.

It localises to the cell inner membrane. The catalysed reaction is Cleaves type-1 transmembrane domains using a catalytic dyad composed of serine and histidine that are contributed by different transmembrane domains.. In terms of biological role, rhomboid-type serine protease that catalyzes intramembrane proteolysis. The chain is Rhomboid protease GlpG from Yersinia pseudotuberculosis serotype I (strain IP32953).